Reading from the N-terminus, the 117-residue chain is Large ribosomal subunit protein bL19 (117 aa).

Belongs to the bacterial ribosomal protein bL19 family.

In terms of biological role, this protein is located at the 30S-50S ribosomal subunit interface and may play a role in the structure and function of the aminoacyl-tRNA binding site. In Christiangramia forsetii (strain DSM 17595 / CGMCC 1.15422 / KT0803) (Gramella forsetii), this protein is Large ribosomal subunit protein bL19.